The chain runs to 820 residues: Protein bicaudal D homolog 2 (820 aa).

S2 is modified (N-acetylserine). The stretch at 20-270 forms a coiled coil; that stretch reads EWLRAEVKRL…LSHYMSINDS (251 aa). The segment at 25-400 is interaction with DYNLL1, DYNC1H1, DYNC1I2, DCTN1 and DCTN2; sequence EVKRLSHELA…RLTENLSALR (376 aa). Phosphoserine occurs at positions 190, 224, and 320. The segment at 313-332 is disordered; sequence SSLDNKTSTPRKDGLAPPSP. T321 is subject to Phosphothreonine. The tract at residues 336–595 is interaction with KIF5A; sequence SDLLSELHIS…LLATEVGRAD (260 aa). Residues 340 to 539 adopt a coiled-coil conformation; it reads SELHISEIQK…VTFSEELANL (200 aa). Phosphoserine is present on residues S345 and S397. Disordered regions lie at residues 400–427, 563–582, 591–618, and 799–820; these read RRLQ…GDYY, QGKA…PVLL, VGRA…DPRR, and HEQT…SPSL. Over residues 404–424 the composition is skewed to basic and acidic residues; that stretch reads AGKERQTSLDNEKDRDSHEDG. Phosphoserine occurs at positions 570 and 578. An interaction with RANBP2 region spans residues 586–820; it reads LLATEVGRAD…SKAKPASPSL (235 aa). The residue at position 598 (T598) is a Phosphothreonine. The span at 602–614 shows a compositional bias: low complexity; that stretch reads SPSPSSSLPSPLS. Residues 662–804 are a coiled coil; it reads DKDKEALMEE…LELDHEQTRR (143 aa). Residues 662 to 810 are interaction with RAB6A; that stretch reads DKDKEALMEE…QTRRGRSKAA (149 aa). Phosphoserine is present on S819.

Belongs to the BicD family. In terms of assembly, part of a tripartite complex with dynein and dynactin, acts an adapter linking the dynein motor complex and dynactin. Interacts with CPNE4 (via VWFA domain). Interacts with NEK9. Interacts with DCTN2. Interacts with RAB6A. Interacts with DNAI1. Interacts with DYNLL1, DYNC1H1, DYNC1I2 and DCTN1. Forms a complex with dynein and dynactin. The dynein-dynactin-BICD2 ternary complex (DDB) binds preferentially to tyrosinated microtubules than to detyrosinated microtubules. Interacts with RANBP2, RAB6A and KIF5A. Interacts with KIF1C. Phosphorylated by NEK9 in vitro. In terms of tissue distribution, ubiquitously expressed with high expression in the spinal cord.

Its subcellular location is the golgi apparatus. The protein resides in the cytoplasm. The protein localises to the cytoskeleton. It localises to the nucleus. It is found in the nuclear pore complex. Its subcellular location is the nucleus envelope. Its function is as follows. Acts as an adapter protein linking the dynein motor complex to various cargos and converts dynein from a non-processive to a highly processive motor in the presence of dynactin. Facilitates and stabilizes the interaction between dynein and dynactin and activates dynein processivity (the ability to move along a microtubule for a long distance without falling off the track). Facilitates the binding of RAB6A to the Golgi by stabilizing its GTP-bound form. Regulates coat complex coatomer protein I (COPI)-independent Golgi-endoplasmic reticulum transport via its interaction with RAB6A and recruitment of the dynein-dynactin motor complex. Contributes to nuclear and centrosomal positioning prior to mitotic entry through regulation of both dynein and kinesin-1. During G2 phase of the cell cycle, associates with RANBP2 at the nuclear pores and recruits dynein and dynactin to the nuclear envelope to ensure proper positioning of the nucleus relative to centrosomes prior to the onset of mitosis. The sequence is that of Protein bicaudal D homolog 2 (Bicd2) from Mus musculus (Mouse).